A 230-amino-acid chain; its full sequence is Large ribosomal subunit protein uL1 (230 aa).

This sequence belongs to the universal ribosomal protein uL1 family. Part of the 50S ribosomal subunit.

In terms of biological role, binds directly to 23S rRNA. The L1 stalk is quite mobile in the ribosome, and is involved in E site tRNA release. Its function is as follows. Protein L1 is also a translational repressor protein, it controls the translation of the L11 operon by binding to its mRNA. The chain is Large ribosomal subunit protein uL1 from Sulfurimonas denitrificans (strain ATCC 33889 / DSM 1251) (Thiomicrospira denitrificans (strain ATCC 33889 / DSM 1251)).